The chain runs to 640 residues: Chaperone protein DnaK (640 aa).

Threonine 196 carries the phosphothreonine; by autocatalysis modification. Residues glycine 547 to threonine 569 are compositionally biased toward basic and acidic residues. 2 disordered regions span residues glycine 547–glutamate 575 and leucine 595–lysine 640. The segment covering threonine 603 to serine 615 has biased composition (polar residues). Over residues glycine 625–valine 634 the composition is skewed to acidic residues.

It belongs to the heat shock protein 70 family.

Its function is as follows. Acts as a chaperone. The chain is Chaperone protein DnaK from Chlorobium phaeobacteroides (strain DSM 266 / SMG 266 / 2430).